The chain runs to 215 residues: uncharacterized protein (215 aa).

Catalysis depends on charge relay system residues serine 114, aspartate 162, and histidine 194.

This sequence belongs to the AB hydrolase superfamily. AB hydrolase 2 family.

This is an uncharacterized protein from Rickettsia felis (strain ATCC VR-1525 / URRWXCal2) (Rickettsia azadi).